The chain runs to 206 residues: MKFLFDLFPVILFFAVFKWGEGNADAAQAFGQQFLSGLVSGGQVTVTQAPILLATAIAIIATILQIGYLLSRRKKVDGTLWLSLAIIVFFGGATIYFHNETFIKWKPTVLYWCFAAALLFSQIFLNKNLIRTMMEKQMSLPDGVWRRVNLSWVAFFITMGLLNLYVAFNFSTAAWVNFKLFGGMGLMFAFIIIQSLLLSKYLKEPQ.

5 helical membrane-spanning segments follow: residues 50–70 (PILL…GYLL), 78–98 (GTLW…IYFH), 105–125 (WKPT…QIFL), 150–170 (LSWV…AFNF), and 173–193 (AAWV…FIII).

Belongs to the YciB family.

The protein localises to the cell inner membrane. In terms of biological role, plays a role in cell envelope biogenesis, maintenance of cell envelope integrity and membrane homeostasis. In Herminiimonas arsenicoxydans, this protein is Inner membrane-spanning protein YciB.